The chain runs to 916 residues: Protein translocase subunit SecA (916 aa).

ATP is bound by residues Gln87, 105 to 109 (GEGKT), and Asp507. Cys900, Cys902, Cys911, and His912 together coordinate Zn(2+).

Belongs to the SecA family. Monomer and homodimer. Part of the essential Sec protein translocation apparatus which comprises SecA, SecYEG and auxiliary proteins SecDF-YajC and YidC. Zn(2+) is required as a cofactor.

It is found in the cell inner membrane. Its subcellular location is the cytoplasm. The catalysed reaction is ATP + H2O + cellular proteinSide 1 = ADP + phosphate + cellular proteinSide 2.. Functionally, part of the Sec protein translocase complex. Interacts with the SecYEG preprotein conducting channel. Has a central role in coupling the hydrolysis of ATP to the transfer of proteins into and across the cell membrane, serving both as a receptor for the preprotein-SecB complex and as an ATP-driven molecular motor driving the stepwise translocation of polypeptide chains across the membrane. The polypeptide is Protein translocase subunit SecA (Neisseria meningitidis serogroup C (strain 053442)).